We begin with the raw amino-acid sequence, 329 residues long: Oxidoreductase sirO (329 aa).

Asp-54 serves as a coordination point for NADP(+). Tyr-59 serves as the catalytic Proton donor. Residue His-118 participates in substrate binding. Residues 148–149, Gln-174, 203–213, and 288–296 contribute to the NADP(+) site; these read SN, SPLCCGLLINA, and SSARQLEES.

This sequence belongs to the aldo/keto reductase family. Aldo/keto reductase 2 subfamily.

Its pathway is mycotoxin biosynthesis. Its function is as follows. Oxidoreductase; part of the gene cluster that mediates the biosynthesis of sirodesmin PL, an epipolythiodioxopiperazine (ETP) characterized by a disulfide bridged cyclic dipeptide and that acts as a phytotoxin which is involved in the blackleg didease of canola. SirD catalyzes the O-prenylation of L-tyrosine (L-Tyr) in the presence of dimethylallyl diphosphate (DMAPP) to yield 4-O-dimethylallyl-L-Tyr, and therefore represents probably the first pathway-specific enzyme in the biosynthesis of sirodesmin PL. 4-O-dimethylallyl-L-Tyr, then undergoes condensation with L-Ser in a reaction catalyzed by the non-ribosomal peptide synthase sirP to form the diketopiperazine (DKP) backbone. Further bishydroxylation of the DKP performed by the cytochrome P450 monooxygenase sirC leads to the production of the intermediate phomamide. This step is essential to form the reactive thiol group required for toxicity of sirodesmin PL. The next steps of sirodesmin biosynthesis are not well understood yet, but some predictions could be made from intermediate compounds identification. Phomamide is converted into phomalizarine via oxidation, probably by sirT. Further oxidation, methylation (by sirM or sirN) and reduction steps convert phomalizarine to deacetyl sirodesmin. Finally, acetyltransferase sirH probably acetylates deacetyl sirodesmin to produce sirodesmin PL. The protein is Oxidoreductase sirO of Leptosphaeria maculans (Blackleg fungus).